Here is a 260-residue protein sequence, read N- to C-terminus: Hemin import ATP-binding protein HmuV (260 aa).

In terms of domain architecture, ABC transporter spans 7–243; sequence IQASNISVTF…ERIEQVYGYS (237 aa). 39–46 is an ATP binding site; the sequence is GPNGAGKS.

Belongs to the ABC transporter superfamily. Heme (hemin) importer (TC 3.A.1.14.5) family. In terms of assembly, the complex is composed of two ATP-binding proteins (HmuV), two transmembrane proteins (HmuU) and a solute-binding protein (HmuT).

The protein localises to the cell inner membrane. Functionally, part of the ABC transporter complex HmuTUV involved in hemin import. Responsible for energy coupling to the transport system. The sequence is that of Hemin import ATP-binding protein HmuV from Vibrio anguillarum (strain ATCC 68554 / 775) (Listonella anguillarum).